Here is a 121-residue protein sequence, read N- to C-terminus: Estrogen receptor (121 aa).

In terms of domain architecture, NR LBD spans 1–121 (LFAPNLLLDR…IRHMSNKGME (121 aa)). Residue Cys45 is the site of S-palmitoyl cysteine attachment.

Belongs to the nuclear hormone receptor family. NR3 subfamily. Binds DNA as a homodimer. Can form a heterodimer with ESR2. Interacts with coactivator NCOA5. Interacts with NCOA7; the interaction is ligand-inducible. Interacts with AKAP13, CUEDC2, HEXIM1, KDM5A, MAP1S, PELP1, SMARD1, and UBE1C. Interacts with MUC1; the interaction is stimulated by 7 beta-estradiol (E2) and enhances ERS1-mediated transcription. Interacts with DNTTIP2, and UIMC1. Interacts with KMT2D/MLL2. Interacts with ATAD2; the interaction is enhanced by estradiol. Interacts with KIF18A and LDB1. Interacts with RLIM (via its C-terminus). Interacts with MACROD1. Interacts with SH2D4A and PLCG. Interacts with SH2D4A; the interaction blocks binding to PLCG and inhibits estrogen-induced cell proliferation. Interacts with DYNLL1. Interacts with CCDC62; the interaction requires estradiol and appears to enhance the transcription of target genes. Interacts with NR2C1; the interaction prevents homodimerization of ESR1 and suppresses its transcriptional activity and cell growth. Interacts with DNAAF4. Interacts with PRMT2. Interacts with PI3KR1 or PIK3R2, SRC and PTK2/FAK1. Interacts with RBFOX2. Interacts with EP300; the interaction is estrogen-dependent and enhanced by CITED1. Interacts with CITED1; the interaction is estrogen-dependent. Interacts with FAM120B, FOXL2, PHB2 and SLC30A9. Interacts with coactivators NCOA3 and NCOA6. Interacts with STK3/MST2 only in the presence of SAV1 and vice-versa. Binds to CSNK1D. Interacts with NCOA2; NCOA2 can interact with ESR1 AF-1 and AF-2 domains simultaneously and mediate their transcriptional synergy. Interacts with DDX5. Interacts with NCOA1; the interaction seems to require a self-association of N-terminal and C-terminal regions. Interacts with ZNF366, DDX17, NFKB1, RELA, SP1 and SP3. Interacts with NRIP1. Interacts with GPER1; the interaction occurs in an estrogen-dependent manner. Interacts with CLOCK and the interaction is stimulated by estrogen. Interacts with TRIP4 (ufmylated); estrogen dependent. Interacts with LMTK3; the interaction phosphorylates ESR1 (in vitro) and protects it against proteasomal degradation. Interacts with CCAR2 (via N-terminus) in a ligand-independent manner. Interacts with ZFHX3. Interacts with SFR1 in a ligand-dependent and -independent manner. Interacts with DCAF13, LATS1 and DCAF1; regulates ESR1 ubiquitination and ubiquitin-mediated proteasomal degradation. Interacts (via DNA-binding domain) with POU4F2 (C-terminus); this interaction increases the estrogen receptor ESR1 transcriptional activity in a DNA- and ligand 17-beta-estradiol-independent manner. Interacts with ESRRB isoform 1. Interacts with UBE3A and WBP2. Interacts with GTF2B. Interacts with RBM39. In the absence of hormonal ligand, interacts with TACC1. Interacts with BAG1; the interaction is promoted in the absence of estradiol (17-beta-estradiol/E2). Interacts with and ubiquitinated by STUB1; the interaction is promoted in the absence of estradiol (17-beta-estradiol/E2). Interacts with NEDD8. Ubiquitinated; regulated by LATS1 via DCAF1 it leads to ESR1 proteasomal degradation. Deubiquitinated by OTUB1. Ubiquitinated by STUB1/CHIP; in the CA1 hippocampal region following loss of endogenous circulating estradiol (17-beta-estradiol/E2). Ubiquitinated by UBR5, leading to its degradation: UBR5 specifically recognizes and binds ligand-bound ESR1 when it is not associated with coactivators (NCOAs). In presence of NCOAs, the UBR5-degron is not accessible, preventing its ubiquitination and degradation. Post-translationally, palmitoylated at Cys-45 by ZDHHC7 and ZDHHC21. Palmitoylation is required for plasma membrane targeting and for rapid intracellular signaling via ERK and AKT kinases and cAMP generation, but not for signaling mediated by the nuclear hormone receptor. In terms of processing, phosphorylated by cyclin A/CDK2 and CK1. Phosphorylation probably enhances transcriptional activity. Dephosphorylation by PPP5C inhibits its transactivation activity. Phosphorylated by LMTK3 (in vitro). Dimethylated by PRMT1. Demethylated by JMJD6.

The protein localises to the nucleus. The protein resides in the cytoplasm. It localises to the golgi apparatus. It is found in the cell membrane. In terms of biological role, nuclear hormone receptor. The steroid hormones and their receptors are involved in the regulation of eukaryotic gene expression and affect cellular proliferation and differentiation in target tissues. Ligand-dependent nuclear transactivation involves either direct homodimer binding to a palindromic estrogen response element (ERE) sequence or association with other DNA-binding transcription factors, such as AP-1/c-Jun, c-Fos, ATF-2, Sp1 and Sp3, to mediate ERE-independent signaling. Ligand binding induces a conformational change allowing subsequent or combinatorial association with multiprotein coactivator complexes through LXXLL motifs of their respective components. Mutual transrepression occurs between the estrogen receptor (ER) and NF-kappa-B in a cell-type specific manner. Decreases NF-kappa-B DNA-binding activity and inhibits NF-kappa-B-mediated transcription from the IL6 promoter and displace RELA/p65 and associated coregulators from the promoter. Recruited to the NF-kappa-B response element of the CCL2 and IL8 promoters and can displace CREBBP. Present with NF-kappa-B components RELA/p65 and NFKB1/p50 on ERE sequences. Can also act synergistically with NF-kappa-B to activate transcription involving respective recruitment adjacent response elements; the function involves CREBBP. Can activate the transcriptional activity of TFF1. Also mediates membrane-initiated estrogen signaling involving various kinase cascades. Essential for MTA1-mediated transcriptional regulation of BRCA1 and BCAS3. Maintains neuronal survival in response to ischemic reperfusion injury when in the presence of circulating estradiol (17-beta-estradiol/E2). This Macaca mulatta (Rhesus macaque) protein is Estrogen receptor (ESR1).